A 204-amino-acid polypeptide reads, in one-letter code: Probable GTP-binding protein EngB (204 aa).

The disordered stretch occupies residues 1 to 21 (MKVSSAEFVTSGTRPAHYPPP). An EngB-type G domain is found at 22 to 194 (ELPEVAFAGR…WARIEVMLAA (173 aa)). GTP is bound by residues 30-37 (GRSNVGKS), 57-61 (GRTQL), 75-78 (DLPG), 142-145 (TKCD), and 173-175 (FSA). S37 and T59 together coordinate Mg(2+).

The protein belongs to the TRAFAC class TrmE-Era-EngA-EngB-Septin-like GTPase superfamily. EngB GTPase family. The cofactor is Mg(2+).

Its function is as follows. Necessary for normal cell division and for the maintenance of normal septation. This chain is Probable GTP-binding protein EngB, found in Geobacter metallireducens (strain ATCC 53774 / DSM 7210 / GS-15).